Here is a 411-residue protein sequence, read N- to C-terminus: Dipeptidase 1 (411 aa).

The signal sequence occupies residues 1 to 16; that stretch reads MWSGWWLWPLVAVCTA. Residues H36 and D38 each contribute to the Zn(2+) site. N-linked (GlcNAc...) asparagine glycosylation occurs at N57. Residues C87 and C170 are joined by a disulfide bond. E141 serves as a coordination point for Zn(2+). Substrate is bound at residue H168. Zn(2+) is bound by residues H214 and H235. C242 and C274 form a disulfide bridge. Position 246 (R246) interacts with substrate. A glycan (N-linked (GlcNAc...) asparagine) is linked at N279. Residue D304 coordinates substrate. N332 and N358 each carry an N-linked (GlcNAc...) asparagine glycan. S385 carries GPI-anchor amidated serine lipidation. Positions 386 to 411 are cleaved as a propeptide — removed in mature form; that stretch reads GASSLHRHWGLLLASLAPLVLCLSLL.

This sequence belongs to the metallo-dependent hydrolases superfamily. Peptidase M19 family. Homodimer; disulfide-linked. Zn(2+) is required as a cofactor. Expressed in lung and kidneys.

It is found in the apical cell membrane. The protein localises to the cell projection. The protein resides in the microvillus membrane. It catalyses the reaction an L-aminoacyl-L-amino acid + H2O = 2 an L-alpha-amino acid. The enzyme catalyses leukotriene D4 + H2O = leukotriene E4 + glycine. The catalysed reaction is a beta-lactam + H2O = a substituted beta-amino acid. It carries out the reaction L-cystine-bis-glycine + 2 H2O = L-cystine + 2 glycine. It catalyses the reaction glycyldehydrophenylalanine + H2O = 2,3-didehydrophenylalanine + glycine. With respect to regulation, inhibited by L-penicillamine. Beta-lactamase activity is inhibited by cilastatin. Hydrolyzes a wide range of dipeptides including the conversion of leukotriene D4 to leukotriene E4. Hydrolyzes cystinyl-bis-glycine (cys-bis-gly) formed during glutathione degradation. Also possesses beta lactamase activity and can hydrolyze the beta-lactam antibiotic imipenem. Its function is as follows. Independently of its dipeptidase activity, acts as an adhesion receptor for neutrophil recruitment from bloodstream into inflamed lungs and liver. The polypeptide is Dipeptidase 1 (DPEP1) (Homo sapiens (Human)).